Consider the following 574-residue polypeptide: MAKKNSQLPSTSEQILERSTTGATFLMMGQLFTKLVTFILNNLLIRFLSPRIFGITAFLEFIQGTVLFFSRDAIRLSTLRISDSGNGIIDDDDEEEYQETHYKSKVLQTAVNFAYIPFWIGFPLSIGLIAWQYRNINAYFITLPFFRWSIFLIWLSIIVELLSEPFFIVNQFMLNYAARSRFESIAVTTGCIVNFIVVYAVQQSRYPMGVVTSDIDKEGIAILAFALGKLAHSITLLACYYWDYLKNFKPKKLFSTRLTKIKTRENNELKKGYPKSTSYFFQNDILQHFKKVYFQLCFKHLLTEGDKLIINSLCTVEEQGIYALLSNYGSLLTRLLFAPIEESLRLFLARLLSSHNPKNLKLSIEVLVNLTRFYIYLSLMIIVFGPANSSFLLQFLIGSKWSTTSVLDTIRVYCFYIPFLSLNGIFEAFFQSVATGDQILKHSYFMMAFSGIFLLNSWLLIEKLKLSIEGLILSNIINMVLRILYCGVFLNKFHRELFTDSSFFFNFKDFKTVIIAGSTICLLDWWFIGYVKNLQQFVVNVLFAMGLLALILVKERQTIQSFINKRAVSNSKDV.

Residues 1–24 are Lumenal-facing; the sequence is MAKKNSQLPSTSEQILERSTTGAT. A helical transmembrane segment spans residues 25 to 45; the sequence is FLMMGQLFTKLVTFILNNLLI. Topologically, residues 46 to 48 are cytoplasmic; it reads RFL. The helical transmembrane segment at 49–69 threads the bilayer; it reads SPRIFGITAFLEFIQGTVLFF. At 70–110 the chain is on the lumenal side; the sequence is SRDAIRLSTLRISDSGNGIIDDDDEEEYQETHYKSKVLQTA. Residues 111–131 form a helical membrane-spanning segment; that stretch reads VNFAYIPFWIGFPLSIGLIAW. The Cytoplasmic segment spans residues 132 to 148; it reads QYRNINAYFITLPFFRW. A helical membrane pass occupies residues 149–169; that stretch reads SIFLIWLSIIVELLSEPFFIV. Topologically, residues 170–181 are lumenal; the sequence is NQFMLNYAARSR. A helical transmembrane segment spans residues 182 to 202; that stretch reads FESIAVTTGCIVNFIVVYAVQ. The Cytoplasmic segment spans residues 203 to 218; sequence QSRYPMGVVTSDIDKE. A helical transmembrane segment spans residues 219–239; that stretch reads GIAILAFALGKLAHSITLLAC. At 240–319 the chain is on the lumenal side; it reads YYWDYLKNFK…INSLCTVEEQ (80 aa). A helical membrane pass occupies residues 320 to 340; it reads GIYALLSNYGSLLTRLLFAPI. Residues 341–372 are Cytoplasmic-facing; that stretch reads EESLRLFLARLLSSHNPKNLKLSIEVLVNLTR. The helical transmembrane segment at 373-393 threads the bilayer; it reads FYIYLSLMIIVFGPANSSFLL. At 394–413 the chain is on the lumenal side; sequence QFLIGSKWSTTSVLDTIRVY. Residues 414–434 form a helical membrane-spanning segment; it reads CFYIPFLSLNGIFEAFFQSVA. The Cytoplasmic segment spans residues 435–443; it reads TGDQILKHS. Residues 444–464 form a helical membrane-spanning segment; it reads YFMMAFSGIFLLNSWLLIEKL. Residues 465–469 are Lumenal-facing; it reads KLSIE. Residues 470–490 traverse the membrane as a helical segment; the sequence is GLILSNIINMVLRILYCGVFL. Residues 491–509 are Cytoplasmic-facing; sequence NKFHRELFTDSSFFFNFKD. A helical transmembrane segment spans residues 510–530; it reads FKTVIIAGSTICLLDWWFIGY. The Lumenal portion of the chain corresponds to 531 to 532; it reads VK. Residues 533–553 form a helical membrane-spanning segment; it reads NLQQFVVNVLFAMGLLALILV. The Cytoplasmic segment spans residues 554–574; it reads KERQTIQSFINKRAVSNSKDV.

It belongs to the RFT1 family.

The protein resides in the endoplasmic reticulum membrane. The protein operates within protein modification; protein glycosylation. Functionally, intramembrane glycolipid transporter that operates in the biosynthetic pathway of dolichol-linked oligosaccharides, the glycan precursors employed in protein asparagine (N)-glycosylation. The sequential addition of sugars to dolichol pyrophosphate produces dolichol-linked oligosaccharides containing fourteen sugars, including two GlcNAcs, nine mannoses and three glucoses. Once assembled, the oligosaccharide is transferred from the lipid to nascent proteins by oligosaccharyltransferases. The assembly of dolichol-linked oligosaccharides begins on the cytosolic side of the endoplasmic reticulum membrane and finishes in its lumen. RFT1 could mediate the translocation of the cytosolically oriented intermediate DolPP-GlcNAc2Man5, produced by ALG11, into the ER lumen where dolichol-linked oligosaccharides assembly continues. However, the intramembrane lipid transporter activity could not be confirmed in vitro. This Saccharomyces cerevisiae (strain ATCC 204508 / S288c) (Baker's yeast) protein is Man(5)GlcNAc(2)-PP-dolichol translocation protein RFT1.